The chain runs to 651 residues: Depolymerase, capsule K21-specific (651 aa).

Residues 100-428 (DYDSDSATDD…SNGNITSVGD (329 aa)) form a catalytic region. Residues E236, D295, E305, and D307 contribute to the active site. A carbohydrate binding region spans residues 447 to 560 (MFQTDTMASL…LFDGIYIQRS (114 aa)). A lectin-like region spans residues 561 to 651 (KYIDWNFAFN…TRCYIRLFLI (91 aa)).

This sequence in the C-terminal section; belongs to the K21-specific depolymerase family.

The protein resides in the virion. In terms of biological role, functions as a receptor binding protein (RBP) and probably mediates the attachment to the host capsular exopolysaccharides. Displays a depolymerase activity that specifically degrades the K21-type polysaccharides of Klebsiella pneumoniae capsule. This is Depolymerase, capsule K21-specific from Klebsiella (Bacteriophage K64-1).